The sequence spans 91 residues: UPF0250 protein Pfl01_4965 (91 aa).

The protein belongs to the UPF0250 family.

This chain is UPF0250 protein Pfl01_4965, found in Pseudomonas fluorescens (strain Pf0-1).